Here is a 243-residue protein sequence, read N- to C-terminus: Ribosomal RNA small subunit methyltransferase J (243 aa).

S-adenosyl-L-methionine is bound by residues 112–113 and Asp-164; that span reads ER.

Belongs to the methyltransferase superfamily. RsmJ family.

The protein resides in the cytoplasm. It catalyses the reaction guanosine(1516) in 16S rRNA + S-adenosyl-L-methionine = N(2)-methylguanosine(1516) in 16S rRNA + S-adenosyl-L-homocysteine + H(+). Functionally, specifically methylates the guanosine in position 1516 of 16S rRNA. In Legionella pneumophila (strain Lens), this protein is Ribosomal RNA small subunit methyltransferase J.